The following is a 281-amino-acid chain: Large ribosomal subunit protein uL2 (281 aa).

Residues 222–281 (TVRGSVMNPNDHPHGGGEGRTPIGRKSPVTPWGKKALGVKTRNTKKPSEKLIVRKRNAKK) are disordered.

This sequence belongs to the universal ribosomal protein uL2 family. Part of the 50S ribosomal subunit. Forms a bridge to the 30S subunit in the 70S ribosome.

One of the primary rRNA binding proteins. Required for association of the 30S and 50S subunits to form the 70S ribosome, for tRNA binding and peptide bond formation. It has been suggested to have peptidyltransferase activity; this is somewhat controversial. Makes several contacts with the 16S rRNA in the 70S ribosome. This Mesoplasma florum (strain ATCC 33453 / NBRC 100688 / NCTC 11704 / L1) (Acholeplasma florum) protein is Large ribosomal subunit protein uL2.